A 442-amino-acid polypeptide reads, in one-letter code: Ribosomal protein uS12 methylthiotransferase RimO (442 aa).

In terms of domain architecture, MTTase N-terminal spans 8–118 (PKVGFVSLGC…VLGHVHKYVE (111 aa)). The [4Fe-4S] cluster site is built by Cys-17, Cys-53, Cys-82, Cys-150, Cys-154, and Cys-157. Residues 136 to 373 (LTPRHYAYLK…MELQQQVSIR (238 aa)) form the Radical SAM core domain. In terms of domain architecture, TRAM spans 376 to 442 (ARKVGKEMLV…EYDLWASLID (67 aa)).

Belongs to the methylthiotransferase family. RimO subfamily. [4Fe-4S] cluster serves as cofactor.

The protein localises to the cytoplasm. The enzyme catalyses L-aspartate(89)-[ribosomal protein uS12]-hydrogen + (sulfur carrier)-SH + AH2 + 2 S-adenosyl-L-methionine = 3-methylsulfanyl-L-aspartate(89)-[ribosomal protein uS12]-hydrogen + (sulfur carrier)-H + 5'-deoxyadenosine + L-methionine + A + S-adenosyl-L-homocysteine + 2 H(+). Catalyzes the methylthiolation of an aspartic acid residue of ribosomal protein uS12. In Aeromonas hydrophila subsp. hydrophila (strain ATCC 7966 / DSM 30187 / BCRC 13018 / CCUG 14551 / JCM 1027 / KCTC 2358 / NCIMB 9240 / NCTC 8049), this protein is Ribosomal protein uS12 methylthiotransferase RimO.